A 390-amino-acid chain; its full sequence is ATP-sensitive inward rectifier potassium channel 11 (390 aa).

The Cytoplasmic portion of the chain corresponds to 1–65 (MLSRKGIIPE…LQDVFTTLVD (65 aa)). ATP contacts are provided by Asn-48 and Arg-50. Residues 66-92 (LKWTHTLLIFTMSFLCSWLLFAMVWWL) form a helical membrane-spanning segment. Residues 93–116 (IAFAHGDLAPGEGAAVPCVTSIHS) lie on the Extracellular side of the membrane. A disulfide bridge links Cys-110 with Cys-142. Residues 117–133 (FSSAFLFSIEVQVTIGF) constitute an intramembrane region (discontinuously helical; Pore-forming). Residues Thr-130 and Phe-133 each coordinate K(+). Positions 130–135 (TIGFGG) match the Selectivity filter motif. The Extracellular portion of the chain corresponds to 134–142 (GGRMVTEEC). The chain crosses the membrane as a helical span at residues 143-171 (PLAILILIVQNIVGLMINAIMLGCIFMKT). Residues 172-390 (AQAHRRAETL…KFSISPDSLS (219 aa)) are Cytoplasmic-facing. Arg-176 contributes to the a 1,2-diacyl-sn-glycero-3-phospho-(1D-myo-inositol-4,5-bisphosphate) binding site. An ATP-binding site is contributed by Tyr-330. The residue at position 341 (Thr-341) is a Phosphothreonine; by MAPK1. Ser-385 carries the post-translational modification Phosphoserine; by MAPK1.

Belongs to the inward rectifier-type potassium channel (TC 1.A.2.1) family. KCNJ11 subfamily. Homotetramer; the homotetramer binds four ATP molecules (one ATP per subunit). Forms an heterooctamer with ABCC8/SUR1; one KCNJ11 homotetramer interacts with four ABCC8/SUR1 molecules. Interacts with ABCC9/SUR2. Phosphorylation by MAPK1 results in changes in channel gating that destabilize the closed states and reduce the ATP sensitivity.

Its subcellular location is the membrane. The catalysed reaction is K(+)(in) = K(+)(out). With respect to regulation, KATP channels are regulated by cytoplasmic ATP/ADP ratios; ATP inhibits the channel by closing the pore, while ADP activates the channel. Activated by phosphatidylinositol 4,5-biphosphate (PtdIns(4,5)P2). Its function is as follows. Inward rectifier potassium channel that forms the pore of ATP-sensitive potassium channels (KATP), regulating potassium permeability as a function of cytoplasmic ATP and ADP concentrations in many different cells. Inward rectifier potassium channels are characterized by a greater tendency to allow potassium to flow into the cell rather than out of it. Their voltage dependence is regulated by the concentration of extracellular potassium; as external potassium is raised, the voltage range of the channel opening shifts to more positive voltages. The inward rectification is mainly due to the blockage of outward current by internal magnesium. Can be blocked by extracellular barium. In pancreatic cells, it forms KATP channels with ABCC8/SUR1. Can form cardiac and smooth muscle-type KATP channels with ABCC9. The polypeptide is ATP-sensitive inward rectifier potassium channel 11 (KCNJ11) (Oryctolagus cuniculus (Rabbit)).